We begin with the raw amino-acid sequence, 165 residues long: MKTSRLPIAIQQAVMRRLREKLAQANLKLGRNYPEPKLSYTQRGTSAGTAWLESYEIRLNPVLLLENSEAFIEEVVPHELAHLLVWKHFGRVAPHGKEWKWMMESVLGVPARRTHQFELQSVRRNTFPYRCKCQEHQLTVRRHNRVVRGEAIYRCVHCGEQLVAK.

A SprT-like domain is found at 20-163 (EKLAQANLKL…RCVHCGEQLV (144 aa)). H78 lines the Zn(2+) pocket. The active site involves E79. Residue H82 participates in Zn(2+) binding.

This sequence belongs to the SprT family. Requires Zn(2+) as cofactor.

The protein resides in the cytoplasm. This Shigella flexneri serotype 5b (strain 8401) protein is Protein SprT.